The chain runs to 346 residues: MAHRPRWTLSQVTELFEKPLLDLLFEAQQVHRQHFDPRQVQVSTLLSIKTGACPEDCKYCPQSSRYKTGLEAERLMEVEQVLESARKAKAAGSTRFCMGAAWKNPHERDMSYLEQMVQGVKAMGLEACMTLGTLSESQAQRLANAGLDYYNHNLDTSPEFYGNIITTRTYQERLDTLEKVRDAGIKVCSGGIVGLGETVKDRAGLLLQLANLPTPPESVPINMLVKVKGTPLADNDDVDAFDFIRTIAVARIMMPTSYVRLSAGREQMNEQTQAMCFMAGANSIFYGCKLLTTPNPEEDKDLQLFRKLGLNPQQTAVLAGDNEQQQRLEQALMTPDTDEYYNAAAL.

Residues 38–256 (RQVQVSTLLS…IAVARIMMPT (219 aa)) form the Radical SAM core domain. Positions 53, 57, and 60 each coordinate [4Fe-4S] cluster. Positions 97, 128, 188, and 260 each coordinate [2Fe-2S] cluster.

This sequence belongs to the radical SAM superfamily. Biotin synthase family. As to quaternary structure, homodimer. It depends on [4Fe-4S] cluster as a cofactor. [2Fe-2S] cluster serves as cofactor.

It carries out the reaction (4R,5S)-dethiobiotin + (sulfur carrier)-SH + 2 reduced [2Fe-2S]-[ferredoxin] + 2 S-adenosyl-L-methionine = (sulfur carrier)-H + biotin + 2 5'-deoxyadenosine + 2 L-methionine + 2 oxidized [2Fe-2S]-[ferredoxin]. Its pathway is cofactor biosynthesis; biotin biosynthesis; biotin from 7,8-diaminononanoate: step 2/2. Functionally, catalyzes the conversion of dethiobiotin (DTB) to biotin by the insertion of a sulfur atom into dethiobiotin via a radical-based mechanism. The protein is Biotin synthase of Escherichia coli O157:H7.